Here is a 252-residue protein sequence, read N- to C-terminus: 5-oxoprolinase subunit A (252 aa).

The protein belongs to the LamB/PxpA family. In terms of assembly, forms a complex composed of PxpA, PxpB and PxpC.

It catalyses the reaction 5-oxo-L-proline + ATP + 2 H2O = L-glutamate + ADP + phosphate + H(+). Catalyzes the cleavage of 5-oxoproline to form L-glutamate coupled to the hydrolysis of ATP to ADP and inorganic phosphate. This chain is 5-oxoprolinase subunit A, found in Photorhabdus laumondii subsp. laumondii (strain DSM 15139 / CIP 105565 / TT01) (Photorhabdus luminescens subsp. laumondii).